Here is a 154-residue protein sequence, read N- to C-terminus: Myoglobin (154 aa).

Residues 2–148 (GLSDGEWQLV…FRNDMAAQYK (147 aa)) enclose the Globin domain. At Ser4 the chain carries Phosphoserine. A nitrite-binding site is contributed by His65. His65 lines the O2 pocket. The residue at position 68 (Thr68) is a Phosphothreonine. His94 contributes to the heme b binding site.

Belongs to the globin family. As to quaternary structure, monomeric.

The protein resides in the cytoplasm. The protein localises to the sarcoplasm. The catalysed reaction is Fe(III)-heme b-[protein] + nitric oxide + H2O = Fe(II)-heme b-[protein] + nitrite + 2 H(+). It catalyses the reaction H2O2 + AH2 = A + 2 H2O. Monomeric heme protein which primary function is to store oxygen and facilitate its diffusion within muscle tissues. Reversibly binds oxygen through a pentacoordinated heme iron and enables its timely and efficient release as needed during periods of heightened demand. Depending on the oxidative conditions of tissues and cells, and in addition to its ability to bind oxygen, it also has a nitrite reductase activity whereby it regulates the production of bioactive nitric oxide. Under stress conditions, like hypoxia and anoxia, it also protects cells against reactive oxygen species thanks to its pseudoperoxidase activity. The polypeptide is Myoglobin (MB) (Bos mutus grunniens (Wild yak)).